The sequence spans 313 residues: Transaldolase (313 aa).

The Schiff-base intermediate with substrate role is filled by lysine 125.

The protein belongs to the transaldolase family. Type 1 subfamily. As to quaternary structure, homodimer.

It localises to the cytoplasm. The catalysed reaction is D-sedoheptulose 7-phosphate + D-glyceraldehyde 3-phosphate = D-erythrose 4-phosphate + beta-D-fructose 6-phosphate. Its pathway is carbohydrate degradation; pentose phosphate pathway; D-glyceraldehyde 3-phosphate and beta-D-fructose 6-phosphate from D-ribose 5-phosphate and D-xylulose 5-phosphate (non-oxidative stage): step 2/3. In terms of biological role, transaldolase is important for the balance of metabolites in the pentose-phosphate pathway. The polypeptide is Transaldolase (Pseudomonas syringae pv. syringae (strain B728a)).